A 320-amino-acid polypeptide reads, in one-letter code: UDP-3-O-acyl-N-acetylglucosamine deacetylase (320 aa).

Histidine 92, histidine 251, and aspartate 255 together coordinate Zn(2+). The Proton donor role is filled by histidine 278.

It belongs to the LpxC family. Requires Zn(2+) as cofactor.

It catalyses the reaction a UDP-3-O-[(3R)-3-hydroxyacyl]-N-acetyl-alpha-D-glucosamine + H2O = a UDP-3-O-[(3R)-3-hydroxyacyl]-alpha-D-glucosamine + acetate. The protein operates within glycolipid biosynthesis; lipid IV(A) biosynthesis; lipid IV(A) from (3R)-3-hydroxytetradecanoyl-[acyl-carrier-protein] and UDP-N-acetyl-alpha-D-glucosamine: step 2/6. Its function is as follows. Catalyzes the hydrolysis of UDP-3-O-myristoyl-N-acetylglucosamine to form UDP-3-O-myristoylglucosamine and acetate, the committed step in lipid A biosynthesis. This chain is UDP-3-O-acyl-N-acetylglucosamine deacetylase, found in Psychrobacter arcticus (strain DSM 17307 / VKM B-2377 / 273-4).